The following is a 375-amino-acid chain: Eukaryotic translation initiation factor 3 subunit F (375 aa).

The 137-residue stretch at 30–166 (VVIQPQALFS…TRAYISAPVG (137 aa)) folds into the MPN domain. Residues 307-375 (LGGESGSGES…EAQNGKEEKK (69 aa)) are disordered. Residues 323 to 332 (QRGGKGGRGG) show a composition bias toward gly residues. Composition is skewed to basic and acidic residues over residues 336-345 (TQERSGEEAR) and 358-375 (RSYE…EEKK).

The protein belongs to the eIF-3 subunit F family. Component of the eukaryotic translation initiation factor 3 (eIF-3) complex.

The protein localises to the cytoplasm. Functionally, component of the eukaryotic translation initiation factor 3 (eIF-3) complex, which is involved in protein synthesis of a specialized repertoire of mRNAs and, together with other initiation factors, stimulates binding of mRNA and methionyl-tRNAi to the 40S ribosome. The eIF-3 complex specifically targets and initiates translation of a subset of mRNAs involved in cell proliferation. The chain is Eukaryotic translation initiation factor 3 subunit F from Aspergillus niger (strain ATCC MYA-4892 / CBS 513.88 / FGSC A1513).